The following is a 143-amino-acid chain: Nucleoside diphosphate kinase (143 aa).

Residues Lys11, Phe59, Arg87, Thr93, Arg104, and Asn114 each contribute to the ATP site. His117 (pros-phosphohistidine intermediate) is an active-site residue.

It belongs to the NDK family. Homotetramer. Mg(2+) is required as a cofactor.

Its subcellular location is the cytoplasm. It carries out the reaction a 2'-deoxyribonucleoside 5'-diphosphate + ATP = a 2'-deoxyribonucleoside 5'-triphosphate + ADP. It catalyses the reaction a ribonucleoside 5'-diphosphate + ATP = a ribonucleoside 5'-triphosphate + ADP. Its function is as follows. Major role in the synthesis of nucleoside triphosphates other than ATP. The ATP gamma phosphate is transferred to the NDP beta phosphate via a ping-pong mechanism, using a phosphorylated active-site intermediate. This chain is Nucleoside diphosphate kinase, found in Enterobacter sp. (strain 638).